The following is a 370-amino-acid chain: Aldo-keto reductase NECHADRAFT_45914 (370 aa).

Residue D78 participates in NADP(+) binding. Residue Y83 is the Proton donor of the active site. H174 contributes to the substrate binding site. NADP(+) is bound by residues 204–205 (SS), Q230, 259–269 (APLASGRLARR), and 333–341 (STVQRIEEA).

This sequence belongs to the aldo/keto reductase family.

It functions in the pathway secondary metabolite biosynthesis. In terms of biological role, aldo-keto reductase; part of the gene cluster that mediates the biosynthesis of sansalvamide, a cyclic pentadepsipeptide that shows promising results as potential anti-cancer drug. The nonribosmal peptide synthetase NRPS30 produces sansalvamide by incorporating successively one phenylalanine, one leucine, one alpha-hydroxyisocaproic acid (HICA), one valine and one leucine before sansalvamide is released from by cyclization by the terminal C domain of NRPS30. The HICA residue is probably provided by reduction of alpha-ketoisocaproate by the cluster-specific aldo-keto reductase (NECHADRAFT_45914). The sequence is that of Aldo-keto reductase NECHADRAFT_45914 from Fusarium vanettenii (strain ATCC MYA-4622 / CBS 123669 / FGSC 9596 / NRRL 45880 / 77-13-4) (Fusarium solani subsp. pisi).